A 157-amino-acid chain; its full sequence is Transcriptional repressor NrdR (157 aa).

Residues 3-34 (CPFCSATDTKVIDSRLVADGHQVRRRRECLLC) fold into a zinc finger. The 91-residue stretch at 49–139 (PRVVKQDGSR…VYRAFEDVSE (91 aa)) folds into the ATP-cone domain.

This sequence belongs to the NrdR family. It depends on Zn(2+) as a cofactor.

Its function is as follows. Negatively regulates transcription of bacterial ribonucleotide reductase nrd genes and operons by binding to NrdR-boxes. This is Transcriptional repressor NrdR from Shewanella loihica (strain ATCC BAA-1088 / PV-4).